A 1023-amino-acid polypeptide reads, in one-letter code: Probable beta-glucosidase E (1023 aa).

Residues 1–51 are disordered; the sequence is MPKSYTPVHDSIPEEDHFSSDDESNFRLHRIDRSASRSQSPKENEGEPSIL. At 1–128 the chain is on the cytoplasmic side; it reads MPKSYTPVHD…AVYYSKTWWR (128 aa). Over residues 11-45 the composition is skewed to basic and acidic residues; that stretch reads SIPEEDHFSSDDESNFRLHRIDRSASRSQSPKENE. The chain crosses the membrane as a helical; Signal-anchor for type II membrane protein span at residues 129-149; sequence TLVVVIIALGLLVWGFLKYAS. Topologically, residues 150-1023 are extracellular; sequence TRGDIWEEYD…NLPLGKPFDP (874 aa). Asn-199 and Asn-387 each carry an N-linked (GlcNAc...) asparagine glycan. The active site involves Asp-415. 2 N-linked (GlcNAc...) asparagine glycosylation sites follow: Asn-458 and Asn-497. Disordered regions lie at residues 485 to 515 and 822 to 841; these read WESP…GSPG and NPSR…PSYD. Over residues 827-838 the composition is skewed to low complexity; it reads PAARPPDAVAPP. Residue Asn-848 is glycosylated (N-linked (GlcNAc...) asparagine). The interval 873-909 is disordered; the sequence is ATTPPPPNPEASGSATDQKPHRTKPSDAGGGAGGNPS. 2 N-linked (GlcNAc...) asparagine glycosylation sites follow: Asn-964 and Asn-979.

It belongs to the glycosyl hydrolase 3 family.

The protein resides in the cell membrane. The catalysed reaction is Hydrolysis of terminal, non-reducing beta-D-glucosyl residues with release of beta-D-glucose.. It functions in the pathway glycan metabolism; cellulose degradation. In terms of biological role, beta-glucosidases are one of a number of cellulolytic enzymes involved in the degradation of cellulosic biomass. Catalyzes the last step releasing glucose from the inhibitory cellobiose. The sequence is that of Probable beta-glucosidase E (bglE) from Emericella nidulans (strain FGSC A4 / ATCC 38163 / CBS 112.46 / NRRL 194 / M139) (Aspergillus nidulans).